Consider the following 305-residue polypeptide: MSQQNVTKVGLRIDVDTYRGTRLGVPKLLEIFQRHDISASFFFTVGPDNMGRHIWRLLRPAFLKKMLRSKAASLYGWDILIRGTLWPGPIIGKKLAHIIKQADDAGHEIGLHAWDHHKWQMKTDVMTPAELHSEIDKGYQLLSTLTGKPIPCSAVAGWRCTDATLEQKQRFGFRYNSDCRGESIFIPQLGMAPQIPVTLPTYDELVGKDNIDHSNYNAEIIKLVNPDGLNVYTIHAEVEGIVCAQLFEELIIQAKENNIEFVPMIELLDHEDIDWPLDEILNIEIDGREGWLSHQASMINKQKSA.

In terms of domain architecture, NodB homology spans 7–262 (TKVGLRIDVD…QAKENNIEFV (256 aa)).

This sequence belongs to the polysaccharide deacetylase family. ArnD deformylase subfamily.

The catalysed reaction is 4-deoxy-4-formamido-alpha-L-arabinopyranosyl di-trans,octa-cis-undecaprenyl phosphate + H2O = 4-amino-4-deoxy-alpha-L-arabinopyranosyl di-trans,octa-cis-undecaprenyl phosphate + formate. It participates in glycolipid biosynthesis; 4-amino-4-deoxy-alpha-L-arabinose undecaprenyl phosphate biosynthesis; 4-amino-4-deoxy-alpha-L-arabinose undecaprenyl phosphate from UDP-4-deoxy-4-formamido-beta-L-arabinose and undecaprenyl phosphate: step 2/2. The protein operates within bacterial outer membrane biogenesis; lipopolysaccharide biosynthesis. Catalyzes the deformylation of 4-deoxy-4-formamido-L-arabinose-phosphoundecaprenol to 4-amino-4-deoxy-L-arabinose-phosphoundecaprenol. The modified arabinose is attached to lipid A and is required for resistance to polymyxin and cationic antimicrobial peptides. The sequence is that of Probable 4-deoxy-4-formamido-L-arabinose-phosphoundecaprenol deformylase ArnD from Shewanella sediminis (strain HAW-EB3).